Reading from the N-terminus, the 554-residue chain is Formate--tetrahydrofolate ligase (554 aa).

64-71 lines the ATP pocket; that stretch reads TPAGEGKS.

It belongs to the formate--tetrahydrofolate ligase family.

The enzyme catalyses (6S)-5,6,7,8-tetrahydrofolate + formate + ATP = (6R)-10-formyltetrahydrofolate + ADP + phosphate. The protein operates within one-carbon metabolism; tetrahydrofolate interconversion. This is Formate--tetrahydrofolate ligase from Leuconostoc citreum (strain KM20).